A 341-amino-acid chain; its full sequence is MEDLEIFLKRFEDLLIDLATYNENESNDYIIYRKKLLSYDYLKDFIPDFIIKNRKPQFFRAYMQEIGGYKERRDLIYKGFERLYDYETIKNFDSDNSYNVNQIENFLERFEDLLIDLATENLKKDGFEEYSLFRKKFLTCNYFKDMPIFLKRNPKHFRYYMQSQGGYKERRKIISEEFNKLFSIIEGSNFNSDSNNKNKSINKKEYDIFVSHSSEDKEDFVKEFVNLLKQKGLSVWYDDDIVKIGHNLRKRISKGIKSSNYAVVIFSEDFFKSKWTNYEYDNIFLDFYDEEKVLPILHDLTIEDLEKFDGSIPLIRALSTKKFTVEEIIHEILERINEEKS.

Positions 204–336 constitute a TIR domain; sequence KEYDIFVSHS…EIIHEILERI (133 aa). Residues 213-214 and Lys-243 each bind NAD(+); that span reads SS. Glu-279 is an active-site residue.

It carries out the reaction NAD(+) + H2O = ADP-D-ribose + nicotinamide + H(+). The enzyme catalyses NAD(+) = 2'cADPR + nicotinamide + H(+). Functionally, NAD(+) hydrolase (NADase) that catalyzes cleavage of NAD(+) into ADP-D-ribose (ADPR) and nicotinamide. In addition to ADPR, also generates a cyclization variant of cyclic ADPR (cADPR), termed v-cADPR (probably 2'cADPR). The polypeptide is Probable 2' cyclic ADP-D-ribose synthase TcpO (Methanobrevibacter olleyae).